The following is a 190-amino-acid chain: Elongation factor P-like protein (190 aa).

The protein belongs to the elongation factor P family.

The polypeptide is Elongation factor P-like protein (Klebsiella pneumoniae (strain 342)).